Reading from the N-terminus, the 746-residue chain is Histone-lysine N-methyltransferase EZH2 (746 aa).

Residues 1 to 340 (MGQTGKKSEK…AKEFAAALTA (340 aa)) form an interaction with DNMT1, DNMT3A and DNMT3B region. Ser21 carries the post-translational modification Phosphoserine; by PKB/AKT1. The interval 39–68 (KTMFSSNRQKILERTETLNQEWKQRRIQPV) is interaction with EED. O-linked (GlcNAc) serine glycosylation occurs at Ser75. Residue Ser76 is modified to Phosphoserine. Residues 180–217 (QYNDDDDDDDGDDPDEREEKQKDLEDNRDDKETCPPRK) are disordered. A compositionally biased stretch (acidic residues) spans 182–195 (NDDDDDDDGDDPDE). The segment covering 196 to 217 (REEKQKDLEDNRDDKETCPPRK) has biased composition (basic and acidic residues). Positions 329–522 (EGAKEFAAAL…SSNHVYNYQP (194 aa)) are interaction with CDYL. Phosphothreonine is present on Thr339. Residues 340 to 426 (AERIKTPPKR…PIKMKPNIEP (87 aa)) form a disordered region. The residue at position 345 (Thr345) is a Phosphothreonine; by CDK1 and CDK2. Over residues 345-357 (TPPKRPGGRRRGR) the composition is skewed to basic residues. Phosphoserine occurs at positions 363 and 366. Phosphothreonine is present on Thr367. The segment covering 374–385 (ESKDTDSDREAG) has biased composition (basic and acidic residues). Thr487 is subject to Phosphothreonine. The CXC domain maps to 503 to 605 (CRKIQLKKDG…SKNVSCKNCS (103 aa)). One can recognise an SET domain in the interval 612–727 (KHLLLAPSDV…TGEELFFDYR (116 aa)). A Glycyl lysine isopeptide (Lys-Gly) (interchain with G-Cter in SUMO2) cross-link involves residue Lys634.

It belongs to the class V-like SAM-binding methyltransferase superfamily. Histone-lysine methyltransferase family. EZ subfamily. In terms of assembly, component of the PRC2/EED-EZH2 complex, which includes EED, EZH2, SUZ12, RBBP4 and RBBP7 and possibly AEBP2. The minimum components required for methyltransferase activity of the PRC2/EED-EZH2 complex are EED, EZH2 and SUZ12. The PRC2 complex may also interact with DNMT1, DNMT3A, DNMT3B and PHF1 via the EZH2 subunit and with SIRT1 via the SUZ12 subunit. Interacts with HDAC1 and HDAC2. Binds ATRX via the SET domain. Interacts with PRAME. Interacts with CDYL. Interacts with EED. Interacts with BMAL1. Interacts with CLOCK and CRY1. Interacts with DNMT3L; the interaction is direct. Interacts with EZHIP; the interaction blocks EZH2 methyltransferase activity. Interacts with ZNF263; recruited to the SIX3 promoter along with other proteins involved in chromatin modification and transcriptional corepression where it contributes to transcriptional repression. Interacts with ARMC12. Interacts with ZMYND8; the interaction is dependent on the presence of chromatin. Interacts with DDX18; this interaction inhibits the PRC2 complex. Phosphorylated by AKT1. Phosphorylation by AKT1 reduces methyltransferase activity. Phosphorylation at Thr-345 by CDK1 and CDK2 promotes maintenance of H3K27me3 levels at EZH2-target loci, thus leading to epigenetic gene silencing. In terms of processing, sumoylated. Post-translationally, glycosylated: O-GlcNAcylation at Ser-75 by OGT increases stability of EZH2 and facilitates the formation of H3K27me3 by the PRC2/EED-EZH2 complex. As to expression, present in actively dividing cells. Widely expressed in early embryos. In later embryogenesis, expression restricted to central and peripheral nervous system, liver and thymus. In adult, highest expression in spleen, testis and placenta. Lower levels in intestine, muscle and ovary and very low levels in brain and liver. No expression in heart, thyroid gland, lung and kidney.

The protein resides in the nucleus. Its subcellular location is the chromosome. The catalysed reaction is L-lysyl(27)-[histone H3] + 3 S-adenosyl-L-methionine = N(6),N(6),N(6)-trimethyl-L-lysyl(27)-[histone H3] + 3 S-adenosyl-L-homocysteine + 3 H(+). Functionally, polycomb group (PcG) protein. Catalytic subunit of the PRC2/EED-EZH2 complex, which methylates (H3K9me) and 'Lys-27' (H3K27me) of histone H3, leading to transcriptional repression of the affected target gene. Able to mono-, di- and trimethylate 'Lys-27' of histone H3 to form H3K27me1, H3K27me2 and H3K27me3, respectively. Displays a preference for substrates with less methylation, loses activity when progressively more methyl groups are incorporated into H3K27, H3K27me0 &gt; H3K27me1 &gt; H3K27me2. Compared to EZH1-containing complexes, it is more abundant in embryonic stem cells and plays a major role in forming H3K27me3, which is required for embryonic stem cell identity and proper differentiation. The PRC2/EED-EZH2 complex may also serve as a recruiting platform for DNA methyltransferases, thereby linking two epigenetic repression systems. Genes repressed by the PRC2/EED-EZH2 complex include HOXA7, HOXB6 and HOXC8. EZH2 can also methylate non-histone proteins such as the transcription factor GATA4 and the nuclear receptor RORA. Regulates the circadian clock via histone methylation at the promoter of the circadian genes. Essential for the CRY1/2-mediated repression of the transcriptional activation of PER1/2 by the CLOCK-BMAL1 heterodimer; involved in the di and trimethylation of 'Lys-27' of histone H3 on PER1/2 promoters which is necessary for the CRY1/2 proteins to inhibit transcription. This is Histone-lysine N-methyltransferase EZH2 from Mus musculus (Mouse).